The chain runs to 900 residues: Alanine--tRNA ligase (900 aa).

Zn(2+) contacts are provided by histidine 568, histidine 572, cysteine 672, and histidine 676.

This sequence belongs to the class-II aminoacyl-tRNA synthetase family. Requires Zn(2+) as cofactor.

Its subcellular location is the cytoplasm. The catalysed reaction is tRNA(Ala) + L-alanine + ATP = L-alanyl-tRNA(Ala) + AMP + diphosphate. Functionally, catalyzes the attachment of alanine to tRNA(Ala) in a two-step reaction: alanine is first activated by ATP to form Ala-AMP and then transferred to the acceptor end of tRNA(Ala). Also edits incorrectly charged Ser-tRNA(Ala) and Gly-tRNA(Ala) via its editing domain. In Mycoplasma genitalium (strain ATCC 33530 / DSM 19775 / NCTC 10195 / G37) (Mycoplasmoides genitalium), this protein is Alanine--tRNA ligase.